Here is a 523-residue protein sequence, read N- to C-terminus: Sensory neuron membrane protein 1 (523 aa).

Over 1–11 the chain is Cytoplasmic; that stretch reads MQLPKELKYAA. Residues 12–32 form a helical membrane-spanning segment; the sequence is IAGGVALFGLIFGWVLFPTIL. Residues 33-458 are Extracellular-facing; it reads KSQLKKEMAL…HQLFIPKRVV (426 aa). 2 N-linked (GlcNAc...) asparagine glycosylation sites follow: asparagine 67 and asparagine 229. 3 disulfide bridges follow: cysteine 268-cysteine 333, cysteine 297-cysteine 352, and cysteine 335-cysteine 341. The N-linked (GlcNAc...) asparagine glycan is linked to asparagine 440. Residues 459-479 form a helical membrane-spanning segment; the sequence is GVLRWWVVSFGSLGAVIGIVF. At 480-523 the chain is on the cytoplasmic side; the sequence is HFRDHIMRLAVSGDTKVSKVTPEEPEQKDISVIGQAQEPAKVNI.

Belongs to the CD36 family. As to expression, detected in sensory neurons in the antenna.

The protein localises to the cell membrane. Functionally, plays an olfactory role that is not restricted to pheromone sensitivity. This is Sensory neuron membrane protein 1 from Heliothis virescens (Tobacco budworm moth).